The chain runs to 60 residues: Large ribosomal subunit protein uL30 (60 aa).

It belongs to the universal ribosomal protein uL30 family. In terms of assembly, part of the 50S ribosomal subunit.

The polypeptide is Large ribosomal subunit protein uL30 (Ligilactobacillus salivarius (strain UCC118) (Lactobacillus salivarius)).